We begin with the raw amino-acid sequence, 410 residues long: UDP-N-acetylglucosamine--N-acetylmuramyl-(pentapeptide) pyrophosphoryl-undecaprenol N-acetylglucosamine transferase (410 aa).

Residues 1–34 are disordered; sequence MKDTVSQPAGGRGATAPRPADAASPSCGSSPSAD. Residues 14–34 show a composition bias toward low complexity; it reads ATAPRPADAASPSCGSSPSAD. UDP-N-acetyl-alpha-D-glucosamine is bound by residues 45–47, Asn167, Arg204, Ser238, and Gln334; that span reads TAG.

The protein belongs to the glycosyltransferase 28 family. MurG subfamily.

The protein localises to the cell membrane. The catalysed reaction is di-trans,octa-cis-undecaprenyl diphospho-N-acetyl-alpha-D-muramoyl-L-alanyl-D-glutamyl-meso-2,6-diaminopimeloyl-D-alanyl-D-alanine + UDP-N-acetyl-alpha-D-glucosamine = di-trans,octa-cis-undecaprenyl diphospho-[N-acetyl-alpha-D-glucosaminyl-(1-&gt;4)]-N-acetyl-alpha-D-muramoyl-L-alanyl-D-glutamyl-meso-2,6-diaminopimeloyl-D-alanyl-D-alanine + UDP + H(+). The protein operates within cell wall biogenesis; peptidoglycan biosynthesis. In terms of biological role, cell wall formation. Catalyzes the transfer of a GlcNAc subunit on undecaprenyl-pyrophosphoryl-MurNAc-pentapeptide (lipid intermediate I) to form undecaprenyl-pyrophosphoryl-MurNAc-(pentapeptide)GlcNAc (lipid intermediate II). In Mycobacterium bovis (strain ATCC BAA-935 / AF2122/97), this protein is UDP-N-acetylglucosamine--N-acetylmuramyl-(pentapeptide) pyrophosphoryl-undecaprenol N-acetylglucosamine transferase.